We begin with the raw amino-acid sequence, 910 residues long: DNA repair and recombination protein RAD54B (910 aa).

Positions 1–14 are enriched in polar residues; it reads MRRSAAPSQLQGNS. The tract at residues 1 to 33 is disordered; that stretch reads MRRSAAPSQLQGNSFKKPKFIPPGRSNPGLNEE. Ser-14 is subject to Phosphoserine. The Helicase ATP-binding domain maps to 313-480; it reads GMRMNGRCGA…FALIDFVNPG (168 aa). 326–333 lines the ATP pocket; it reads DEMGLGKT. The DEGH box signature appears at 431-434; sequence DEGH. The Helicase C-terminal domain maps to 649 to 810; that stretch reads KLLAVIHELR…HIQFSVEELK (162 aa).

The protein belongs to the SNF2/RAD54 helicase family. In terms of assembly, interacts with RAD51 through the NH2-terminal domain. Immunoprecipitation experiments show that the interaction is constitutive and not induced by ionizing radiation. The interaction may be indirect. Abundantly expressed in testis and spleen. Relatively low levels observed in thymus, prostate, ovary and colon.

The protein resides in the nucleus. Functionally, involved in DNA repair and mitotic recombination. May play an active role in recombination processes in concert with other members of the RAD52 epistasis group. The protein is DNA repair and recombination protein RAD54B (RAD54B) of Homo sapiens (Human).